Consider the following 655-residue polypeptide: p-hydroxybenzoic acid efflux pump subunit AaeB (655 aa).

11 consecutive transmembrane segments (helical) span residues F13–L33, W38–P58, L69–I89, L93–V113, W121–L141, E152–I172, L370–V390, F407–P427, Q431–V451, L455–M475, and F482–L502.

The protein belongs to the aromatic acid exporter ArAE (TC 2.A.85) family.

Its subcellular location is the cell inner membrane. Its function is as follows. Forms an efflux pump with AaeA. Could function as a metabolic relief valve, allowing to eliminate certain compounds when they accumulate to high levels in the cell. This chain is p-hydroxybenzoic acid efflux pump subunit AaeB, found in Shigella boydii serotype 4 (strain Sb227).